The sequence spans 60 residues: Putative mercuric resistance protein (60 aa).

The sequence is that of Putative mercuric resistance protein from Pseudomonas aeruginosa.